The sequence spans 447 residues: Chorismate synthase, chloroplastic (447 aa).

Residues 1–24 (MASSLSTKPFLSGSRRRSTTDGSG) are disordered. The N-terminal 57 residues, 1-57 (MASSLSTKPFLSGSRRRSTTDGSGWSYFQTSDLRQLSNQSVQISVRRQTAPLKLVVQ), are a transit peptide targeting the chloroplast.

This sequence belongs to the chorismate synthase family. Homotetramer. Requires FMNH2 as cofactor. In terms of processing, the N-terminus is blocked.

Its subcellular location is the plastid. It localises to the chloroplast. It catalyses the reaction 5-O-(1-carboxyvinyl)-3-phosphoshikimate = chorismate + phosphate. Its pathway is metabolic intermediate biosynthesis; chorismate biosynthesis; chorismate from D-erythrose 4-phosphate and phosphoenolpyruvate: step 7/7. Its function is as follows. Catalyzes the last common step of the biosynthesis of aromatic amino acids, produced via the shikimic acid pathway. This Capnoides sempervirens (Rock-harlequin) protein is Chorismate synthase, chloroplastic.